Here is a 265-residue protein sequence, read N- to C-terminus: tRNA pseudouridine synthase A (265 aa).

Asp-53 acts as the Nucleophile in catalysis. Residue Tyr-111 participates in substrate binding.

Belongs to the tRNA pseudouridine synthase TruA family. In terms of assembly, homodimer.

The enzyme catalyses uridine(38/39/40) in tRNA = pseudouridine(38/39/40) in tRNA. Its function is as follows. Formation of pseudouridine at positions 38, 39 and 40 in the anticodon stem and loop of transfer RNAs. This Acinetobacter baumannii (strain ACICU) protein is tRNA pseudouridine synthase A.